Here is a 289-residue protein sequence, read N- to C-terminus: ATP synthase gamma chain (289 aa).

The protein belongs to the ATPase gamma chain family. As to quaternary structure, F-type ATPases have 2 components, CF(1) - the catalytic core - and CF(0) - the membrane proton channel. CF(1) has five subunits: alpha(3), beta(3), gamma(1), delta(1), epsilon(1). CF(0) has three main subunits: a, b and c.

Its subcellular location is the cell inner membrane. Its function is as follows. Produces ATP from ADP in the presence of a proton gradient across the membrane. The gamma chain is believed to be important in regulating ATPase activity and the flow of protons through the CF(0) complex. The protein is ATP synthase gamma chain of Herminiimonas arsenicoxydans.